The primary structure comprises 122 residues: Glucagon-2 (122 aa).

The N-terminal stretch at 1–21 (MTSLHSLAGLLLLMIIQSSWQ) is a signal peptide. 2 consecutive propeptides follow at residues 83-86 (NGLF) and glutamate 122.

Belongs to the glucagon family.

The protein resides in the secreted. Promotes hydrolysis of glycogen and lipids, and raises the blood sugar level. This Lophius americanus (American angler) protein is Glucagon-2 (gcg2).